A 341-amino-acid chain; its full sequence is Inositol 2-dehydrogenase (341 aa).

The protein belongs to the Gfo/Idh/MocA family. Homotetramer.

It catalyses the reaction myo-inositol + NAD(+) = scyllo-inosose + NADH + H(+). In terms of biological role, involved in the oxidation of myo-inositol (MI) to 2-keto-myo-inositol (2KMI or 2-inosose). The polypeptide is Inositol 2-dehydrogenase (Acidothermus cellulolyticus (strain ATCC 43068 / DSM 8971 / 11B)).